A 329-amino-acid chain; its full sequence is Malate dehydrogenase (329 aa).

Residue 12-18 (GAAGQIG) coordinates NAD(+). Residues R93 and R99 each contribute to the substrate site. NAD(+) is bound by residues N106, Q113, and 130-132 (VGN). Positions 132 and 163 each coordinate substrate. The active-site Proton acceptor is the H188.

The protein belongs to the LDH/MDH superfamily. MDH type 2 family.

It catalyses the reaction (S)-malate + NAD(+) = oxaloacetate + NADH + H(+). With respect to regulation, strongly inhibited by Hg(2+) and Zn(2+). Activated by Na(+), NH(4)(+), Ca(2+), Cu(2+) and Mg(2+). Catalyzes the reversible oxidation of malate to oxaloacetate. Exhibits remarkably higher catalytic efficiency for oxaloacetate reduction than for malate oxidation in vitro. Highly specific for NAD(H). Can also use NADPH for oxaloacetate reduction, but catalytic efficiency is 97-fold higher with NADH. No activity detected with NADP(+) and malate. In Streptomyces avermitilis (strain ATCC 31267 / DSM 46492 / JCM 5070 / NBRC 14893 / NCIMB 12804 / NRRL 8165 / MA-4680), this protein is Malate dehydrogenase.